The sequence spans 1064 residues: Bifunctional cytochrome P450/NADPH--P450 reductase ascE (1064 aa).

Residues 1 to 484 (MTELIPGPKG…LHGGAKKGSK (484 aa)) are cytochrome P450. Heme is bound at residue cysteine 411. Positions 485–1064 (IDGPSSGASL…ANRYVTEIFA (580 aa)) are NADPH-P-450 reductase. The Flavodoxin-like domain occupies 504-644 (MTILYGSDSG…DFERWQDDQL (141 aa)). FMN contacts are provided by residues 510 to 514 (SDSGT) and 588 to 620 (VYGCGNKDYTSTFHRIPKLLDAEFERCGAKRIA). The FAD-binding FR-type domain maps to 676 to 905 (VDADEATVQS…KPALRLFHPP (230 aa)).

It in the N-terminal section; belongs to the cytochrome P450 family. FAD is required as a cofactor. It depends on FMN as a cofactor. Heme serves as cofactor.

The enzyme catalyses ilicicolin A + NADPH + O2 + H(+) = ilicicolin A epoxide + NADP(+) + H2O. It participates in secondary metabolite biosynthesis; terpenoid biosynthesis. Bifunctional cytochrome P450/NADPH--P450 reductase; part of the asc-1 gene cluster that mediates the biosynthesis both ascochlorin and ascofuranone, a strong inhibitor of cyanide-insensitive alternative oxidases and a promising drug candidate against African trypanosomiasis. The first step in the pathway is performed by the non-reducing polyketide synthase ascC that produces orsellinic acid by condensing acetyl-CoA with 3 malonyl-CoA units. Orsellinic acid is then prenylated by the prenyltransferase ascA to yield ilicicolinic acid B. Ilicicolinic acid B is further reduced to ilicicolin B by the reductase ascB. The halogenase ascD then chlorinates ilicicolin B to produce ilicicolin A which is converted to ilicicolin A epoxide by the cytochrome P450 monooxygenase ascE that catalyzes stereoselective epoxidation of the terminal double bond of the prenyl group. Ilicicolin A epoxide is the last common precursor for the biosynthesis of ascofuranone and ascochlorin. The terpene cyclase ascF produces a monocyclic terpene, and the cyclization reaction is proposed to be initiated by protonation of the terminal epoxide of ilicicolin A epoxide to generate a monocyclic tertiarycation, which is followed by a series of hydride and methyl shifts with abstraction of proton, leading to the formation of the (14S,15R,19R)-trimethylcyclohexanone ring structure of ilicicolin C, which is finally reduced to ascochlorin by the dehydrogenase ascG. On the other hand, ilicicolin A epoxide is hydroxylated by the cytochrome P450 monooxygenase ascH, and the resultant product is cyclized by the terpene cyclase ascI to ascofuranol via protonation-initiated epoxide ring opening, which facilitates the 6-endo-tet cyclization to form the tetrahy-drofuran ring. Finally, ascofuranol is oxidized into ascofuranone by ascJ. This chain is Bifunctional cytochrome P450/NADPH--P450 reductase ascE, found in Acremonium egyptiacum (Oospora egyptiaca).